The chain runs to 326 residues: Meso-diaminopimelate D-dehydrogenase (326 aa).

NADP(+) contacts are provided by residues 11-14 (YGNL), 35-37 (TRR), 69-72 (CGGS), 92-94 (SFD), and 121-125 (VGWDP). Residues aspartate 94, aspartate 124, tryptophan 148, 154–155 (QG), threonine 173, arginine 199, histidine 249, and asparagine 276 each bind substrate.

It belongs to the diaminopimelate dehydrogenase family. As to quaternary structure, homodimer.

The enzyme catalyses meso-2,6-diaminopimelate + NADP(+) + H2O = (S)-2-amino-6-oxoheptanedioate + NH4(+) + NADPH + H(+). Its pathway is amino-acid biosynthesis; L-lysine biosynthesis via DAP pathway; DL-2,6-diaminopimelate from (S)-tetrahydrodipicolinate: step 1/1. Its activity is regulated as follows. The enzyme is completely inhibited by p-chloromercuribenzoate and HgCl(2) in vitro. Thioglycollate, L-cysteine and Cu(2+) also strongly inhibit the enzyme. Functionally, catalyzes the reversible NADPH-dependent reductive amination of L-2-amino-6-oxopimelate, the acyclic form of L-tetrahydrodipicolinate, to generate the meso compound, D,L-2,6-diaminopimelate. Probably plays a role in lysine biosynthesis. Is highly specific for meso-2,6-diaminopimelate as the electron donor, since the following amino acids are inert for the oxidative deamination reaction: DL-2-aminopimelate, D-glutamate, L-glutamate, D-aspartate, L-aspartate, D-alanine, L-alanine, D-valine, L-valine, D-lysine, L-lysine, D-phenylalanine, L-phenylalanine, D-leucine, L-leucine, D-threonine, L-threonine, D-serine, L-serine, D-tryptophan, L-tryptophan, D-cysteine, L-cysteine, D-histidine, L-histidine, D-methionine, D-arginine, D-proline, D-asparagine, D-glutamine, D-isoleucine and D-ornithine. Moreover, exclusively uses NADP as the electron acceptor for the oxidative deamination of meso-DAP; NAD is inert. The protein is Meso-diaminopimelate D-dehydrogenase (ddh) of Ureibacillus thermosphaericus.